The sequence spans 412 residues: MRGKLLPLAGLYLVQGLPYGLQSGLLPVLLRAGGLSLTRVGLAKVLYAPWLLKLAWAPLVDAQGSARAWVTRSTAGLGLVCGLLAGLPPPGAGQAGLPAAVAGLLLLLNLGAAMQDVALDALAVQLLEPAELGPGNTVQVVAYKLGAALAGGALLALLPTFSWPQLFLLLAATYWLAAALAWAAPALRRLPQQPPSEQRPHTAHLLRDVLAVPGTVWTAGFVLTYKLGEQGASSLFPLLLLDHGVSAPELGLWNGVGAVVCSIAGSSLGGTLLAKHWKLLPLLRSVLRFRLGGLACQTALVFHLDTLGASMDAGTILRGSALLSLCLQHFLGGLVTTVTFTGMMRCSQLAPRALQATHYSLLATLELLGKLLLGTLAGGLADGLGPHPCFLLLLILSAFPVLYLDLAPSTFL.

Transmembrane regions (helical) follow at residues 10–30 (GLYL…PVLL), 40–60 (VGLA…APLV), 73–93 (STAG…PGAG), 94–114 (QAGL…GAAM), 138–158 (VQVV…LALL), 166–186 (LFLL…AAPA), 209–229 (VLAV…KLGE), 250–270 (LGLW…SLGG), 291–311 (LGGL…GASM), 321–341 (ALLS…VTFT), 361–381 (LLAT…GGLA), and 384–404 (LGPH…VLYL).

This sequence belongs to the major facilitator superfamily.

The protein localises to the membrane. This Homo sapiens (Human) protein is Major facilitator superfamily domain-containing protein 3 (MFSD3).